A 283-amino-acid chain; its full sequence is Probable endonuclease 4 (283 aa).

Zn(2+) contacts are provided by histidine 69, histidine 113, glutamate 148, aspartate 182, histidine 185, histidine 217, aspartate 230, histidine 232, and glutamate 262.

Belongs to the AP endonuclease 2 family. Zn(2+) is required as a cofactor.

The catalysed reaction is Endonucleolytic cleavage to 5'-phosphooligonucleotide end-products.. Its function is as follows. Endonuclease IV plays a role in DNA repair. It cleaves phosphodiester bonds at apurinic or apyrimidinic (AP) sites, generating a 3'-hydroxyl group and a 5'-terminal sugar phosphate. The chain is Probable endonuclease 4 from Bifidobacterium longum (strain DJO10A).